The primary structure comprises 369 residues: Hsc70-interacting protein (369 aa).

Residues 38-97 (MGGKVPPATQKAKSEENTKEEKPDSKKVEEDLKADEPSSEESDLEIDKEGVIEPDTDAPQ) form a disordered region. Residues 49–73 (AKSEENTKEEKPDSKKVEEDLKADE) are compositionally biased toward basic and acidic residues. 3 TPR repeats span residues 114–147 (ANDK…NPRL), 148–181 (AILY…NPDS), and 182–215 (AQPY…DYDE). Residues 256–272 (KAREEHERAQREEEARR) show a composition bias toward basic and acidic residues. The disordered stretch occupies residues 256–300 (KAREEHERAQREEEARRQSGAQYGSFPGGFPGGMPGNFPGGMPGM). Residues 281 to 300 (FPGGFPGGMPGNFPGGMPGM) show a composition bias toward gly residues. One can recognise an STI1 domain in the interval 319-358 (DPEVLAAMQDPEVMVAFQDVAQNPANMSKYQSNPKVMNLI). S346 is subject to Phosphoserine; by GRK5. Residues K353 and K360 each carry the N6-acetyllysine modification.

Belongs to the FAM10 family. As to quaternary structure, homotetramer. Interacts with HSC70 as well as DNAJ homologs and HSP90. Interacts (via the C-terminus 303- 319 AA) with GRK5.

The protein localises to the cytoplasm. Its function is as follows. One HIP oligomer binds the ATPase domains of at least two HSC70 molecules dependent on activation of the HSC70 ATPase by HSP40. Stabilizes the ADP state of HSC70 that has a high affinity for substrate protein. Through its own chaperone activity, it may contribute to the interaction of HSC70 with various target proteins. The protein is Hsc70-interacting protein (ST13) of Homo sapiens (Human).